A 336-amino-acid chain; its full sequence is Dihydroorotate dehydrogenase (quinone) (336 aa).

Residues 62–66 (AGLDK) and T86 contribute to the FMN site. Position 66 (K66) interacts with substrate. 111–115 (NRMGF) serves as a coordination point for substrate. FMN-binding residues include N139 and N172. N172 serves as a coordination point for substrate. Residue S175 is the Nucleophile of the active site. N177 contributes to the substrate binding site. Residues K217 and T245 each coordinate FMN. Substrate is bound at residue 246–247 (NT). FMN-binding positions include G268, G297, and 318 to 319 (YS).

This sequence belongs to the dihydroorotate dehydrogenase family. Type 2 subfamily. In terms of assembly, monomer. It depends on FMN as a cofactor.

The protein localises to the cell membrane. The enzyme catalyses (S)-dihydroorotate + a quinone = orotate + a quinol. The protein operates within pyrimidine metabolism; UMP biosynthesis via de novo pathway; orotate from (S)-dihydroorotate (quinone route): step 1/1. Catalyzes the conversion of dihydroorotate to orotate with quinone as electron acceptor. The polypeptide is Dihydroorotate dehydrogenase (quinone) (Aliivibrio fischeri (strain ATCC 700601 / ES114) (Vibrio fischeri)).